Consider the following 104-residue polypeptide: PE-PGRS family protein PE_PGRS60 (104 aa).

The 60-residue stretch at 1 to 60 folds into the PE domain; it reads MSYVIAAPEALVAAATDLATLGSTIGAANAAAAGSTTALLTAGADEVSAAIAAYSECTAR. The segment at 64-104 is disordered; the sequence is HSVRGRRRSMSGSCRPWPQVGAPMRPPRPPASRRCRARSIC. The segment covering 94-104 has biased composition (basic residues); that stretch reads ASRRCRARSIC.

Belongs to the mycobacterial PE family. PGRS subfamily.

Its function is as follows. Binds fibronectin. May contribute to pathogenicity. The protein is PE-PGRS family protein PE_PGRS60 of Mycobacterium tuberculosis (strain ATCC 25618 / H37Rv).